Here is an 88-residue protein sequence, read N- to C-terminus: Small ribosomal subunit protein uS15 (88 aa).

Belongs to the universal ribosomal protein uS15 family. Part of the 30S ribosomal subunit. Forms a bridge to the 50S subunit in the 70S ribosome, contacting the 23S rRNA.

Its function is as follows. One of the primary rRNA binding proteins, it binds directly to 16S rRNA where it helps nucleate assembly of the platform of the 30S subunit by binding and bridging several RNA helices of the 16S rRNA. Functionally, forms an intersubunit bridge (bridge B4) with the 23S rRNA of the 50S subunit in the ribosome. This Thermoanaerobacter pseudethanolicus (strain ATCC 33223 / 39E) (Clostridium thermohydrosulfuricum) protein is Small ribosomal subunit protein uS15.